The sequence spans 447 residues: ATP-dependent protease ATPase subunit HslU (447 aa).

ATP contacts are provided by residues Ile-18, 60–65 (GVGKTE), Asp-259, Glu-325, and Arg-397.

Belongs to the ClpX chaperone family. HslU subfamily. A double ring-shaped homohexamer of HslV is capped on each side by a ring-shaped HslU homohexamer. The assembly of the HslU/HslV complex is dependent on binding of ATP.

The protein resides in the cytoplasm. Its function is as follows. ATPase subunit of a proteasome-like degradation complex; this subunit has chaperone activity. The binding of ATP and its subsequent hydrolysis by HslU are essential for unfolding of protein substrates subsequently hydrolyzed by HslV. HslU recognizes the N-terminal part of its protein substrates and unfolds these before they are guided to HslV for hydrolysis. This Burkholderia pseudomallei (strain 668) protein is ATP-dependent protease ATPase subunit HslU.